Reading from the N-terminus, the 456-residue chain is Cytochrome P450 monooxygenase avaH (456 aa).

A helical membrane pass occupies residues 243–263; sequence LMSYFVSVFLVNVALFNAVSI. Cysteine 403 contacts heme.

Belongs to the cytochrome P450 family. It depends on heme as a cofactor.

It is found in the membrane. It functions in the pathway secondary metabolite biosynthesis. Functionally, cytochrome P450 monooxygenase; part of the cluster that mediates the biosynthesis of a highly modified cyclo-arginine-tryptophan dipeptide (cRW). The first step of the pathway is perfornmed by the arginine-containing cyclodipeptide synthase (RCPDS) avaA that acts as the scaffold-generating enzyme and is responsible for formation of the cyclo-Arg-Trp (cRW) diketopiperazine. AvaB then acts as a multifunctional flavoenzyme that is responsible for generating the cyclo-Arg-formylkynurenine DKP, which can be deformylated by avaC. AvaB then further catalyzes an additional N-oxidation followed by cyclization and dehydration. The next step is an N-acetylation of the guanidine group catalyzed by the arginine N-acetyltransferase avaD. The roles of the additional enzymes identified within the ava cluster still have to be determined. The protein is Cytochrome P450 monooxygenase avaH of Aspergillus versicolor.